The sequence spans 245 residues: MIIPAIDLIDGNVVRLYQGDYGQQTTFDLSPLAQLQSYEAQGAKWLHIVDLTGAKDPAKRQTRLISELVAELNANIQVGGGIRTEEQVTELLAIGVKRVVIGSLAVKEPELVKQWFIKYGSEAICLALDVNINQSGEKMVAVSGWQSGGGKSLESLVETFSAVGLKHALVTDISRDGTLTGANTALYQEIAAIYPDIAWQASGGIATLEDVAAVRDSGAAGIIIGKALLINQFNVAEAIQCWPND.

The active-site Proton acceptor is Asp-7. Asp-129 (proton donor) is an active-site residue.

It belongs to the HisA/HisF family.

It is found in the cytoplasm. It catalyses the reaction 1-(5-phospho-beta-D-ribosyl)-5-[(5-phospho-beta-D-ribosylamino)methylideneamino]imidazole-4-carboxamide = 5-[(5-phospho-1-deoxy-D-ribulos-1-ylimino)methylamino]-1-(5-phospho-beta-D-ribosyl)imidazole-4-carboxamide. The protein operates within amino-acid biosynthesis; L-histidine biosynthesis; L-histidine from 5-phospho-alpha-D-ribose 1-diphosphate: step 4/9. The polypeptide is 1-(5-phosphoribosyl)-5-[(5-phosphoribosylamino)methylideneamino] imidazole-4-carboxamide isomerase (Shewanella putrefaciens (strain CN-32 / ATCC BAA-453)).